Here is a 447-residue protein sequence, read N- to C-terminus: Cytochrome P450 BJ-4 (447 aa).

Cys392 provides a ligand contact to heme.

This sequence belongs to the cytochrome P450 family. Heme is required as a cofactor.

In terms of biological role, cytochromes P450 are a group of heme-thiolate monooxygenases. They oxidize a variety of structurally unrelated compounds, including steroids, fatty acids, and xenobiotics. The protein is Cytochrome P450 BJ-4 (cyp117) of Bradyrhizobium diazoefficiens (strain JCM 10833 / BCRC 13528 / IAM 13628 / NBRC 14792 / USDA 110).